Reading from the N-terminus, the 906-residue chain is Protein translocase subunit SecA (906 aa).

Residues Gln89, Gly107–Thr111, and Asp502 each bind ATP. The interval Glu829 to Tyr898 is disordered. A compositionally biased stretch (basic and acidic residues) spans Trp858 to Asp877. Zn(2+) contacts are provided by Cys890, Cys892, Cys901, and His902.

The protein belongs to the SecA family. Monomer and homodimer. Part of the essential Sec protein translocation apparatus which comprises SecA, SecYEG and auxiliary proteins SecDF-YajC and YidC. Requires Zn(2+) as cofactor.

It localises to the cell inner membrane. Its subcellular location is the cytoplasm. It catalyses the reaction ATP + H2O + cellular proteinSide 1 = ADP + phosphate + cellular proteinSide 2.. Its function is as follows. Part of the Sec protein translocase complex. Interacts with the SecYEG preprotein conducting channel. Has a central role in coupling the hydrolysis of ATP to the transfer of proteins into and across the cell membrane, serving both as a receptor for the preprotein-SecB complex and as an ATP-driven molecular motor driving the stepwise translocation of polypeptide chains across the membrane. The chain is Protein translocase subunit SecA from Brucella anthropi (strain ATCC 49188 / DSM 6882 / CCUG 24695 / JCM 21032 / LMG 3331 / NBRC 15819 / NCTC 12168 / Alc 37) (Ochrobactrum anthropi).